A 298-amino-acid chain; its full sequence is Porphobilinogen deaminase (298 aa).

Cys-239 is subject to S-(dipyrrolylmethanemethyl)cysteine.

Belongs to the HMBS family. In terms of assembly, monomer. Dipyrromethane serves as cofactor.

It catalyses the reaction 4 porphobilinogen + H2O = hydroxymethylbilane + 4 NH4(+). The protein operates within porphyrin-containing compound metabolism; protoporphyrin-IX biosynthesis; coproporphyrinogen-III from 5-aminolevulinate: step 2/4. In terms of biological role, tetrapolymerization of the monopyrrole PBG into the hydroxymethylbilane pre-uroporphyrinogen in several discrete steps. This chain is Porphobilinogen deaminase, found in Orientia tsutsugamushi (strain Boryong) (Rickettsia tsutsugamushi).